The sequence spans 224 residues: UPF0758 protein CV_3079 (224 aa).

An MPN domain is found at 102–224 (ALSSPQQVRD…AESFAERGWL (123 aa)). His173, His175, and Asp186 together coordinate Zn(2+). Positions 173-186 (HNHPSGVSEPSSAD) match the JAMM motif motif.

It belongs to the UPF0758 family.

In Chromobacterium violaceum (strain ATCC 12472 / DSM 30191 / JCM 1249 / CCUG 213 / NBRC 12614 / NCIMB 9131 / NCTC 9757 / MK), this protein is UPF0758 protein CV_3079.